We begin with the raw amino-acid sequence, 564 residues long: NAD-dependent malic enzyme (564 aa).

The Proton donor role is filled by Y102. R155 is a binding site for NAD(+). The active-site Proton acceptor is K173. Residues E244, D245, and D268 each contribute to the a divalent metal cation site. Residues D268 and N417 each contribute to the NAD(+) site.

Belongs to the malic enzymes family. In terms of assembly, homotetramer. Requires Mg(2+) as cofactor. It depends on Mn(2+) as a cofactor.

It carries out the reaction (S)-malate + NAD(+) = pyruvate + CO2 + NADH. It catalyses the reaction oxaloacetate + H(+) = pyruvate + CO2. The chain is NAD-dependent malic enzyme from Pseudomonas aeruginosa (strain ATCC 15692 / DSM 22644 / CIP 104116 / JCM 14847 / LMG 12228 / 1C / PRS 101 / PAO1).